The sequence spans 818 residues: Catenin beta (818 aa).

Polar residues-rich tracts occupy residues 1 to 21 (METYQQMNSGSGPRSVGTPQG) and 48 to 66 (GDSGIQSGATTQAPPSVSS). 2 disordered regions span residues 1–24 (METYQQMNSGSGPRSVGTPQGQYM) and 48–71 (GDSGIQSGATTQAPPSVSSKHGLD). 7 ARM repeats span residues 164-203 (NYQDDADLATRAIPELTKLLNDEDQVVVSQAAMMVHQLSK), 248-287 (RQGLLTIFKSGGIPALVKLLSSPVESVLFYAITTLHNLLL), 412-451 (DAATKSSDIEGLLQMLVQLLASNDINIVTCAAGILSNLTC), 454-495 (QRNK…HLTS), 501-541 (EMAQ…NLAL), 543-582 (PANHAPLREHGAIPRIVQLLIRAHQDTQRRATAGSGNTSA), and 648-687 (KEGAEMIEQEGTTAPLTELLHSRNEGVATYAAAVLFRMSE). The disordered stretch occupies residues 732–818 (QGFRGYQGSG…QMAAWFDTDL (87 aa)).

This sequence belongs to the beta-catenin family.

The protein localises to the cytoplasm. The protein resides in the cytoskeleton. In terms of biological role, binds to the cytoplasmic domain of the cell-cell adhesion molecule E-cadherin, and perhaps to other (membrane) proteins. The association of catenins to cadherins produces a complex which is linked to the actin filament network, and which seems to be of primary importance for cadherins cell-adhesion properties. This chain is Catenin beta, found in Urechis caupo (Innkeeper worm).